We begin with the raw amino-acid sequence, 145 residues long: Large ribosomal subunit protein uL11 (145 aa).

It belongs to the universal ribosomal protein uL11 family. As to quaternary structure, part of the ribosomal stalk of the 50S ribosomal subunit. Interacts with L10 and the large rRNA to form the base of the stalk. L10 forms an elongated spine to which L12 dimers bind in a sequential fashion forming a multimeric L10(L12)X complex. One or more lysine residues are methylated.

Its function is as follows. Forms part of the ribosomal stalk which helps the ribosome interact with GTP-bound translation factors. The protein is Large ribosomal subunit protein uL11 of Aquifex aeolicus (strain VF5).